The following is a 609-amino-acid chain: COP9 signalosome complex subunit 5 (609 aa).

An MPN domain is found at 75 to 215 (CYISSLALMK…IGAFRTYPEG (141 aa)). Zn(2+) contacts are provided by histidine 161, histidine 163, and aspartate 174. The short motif at 161-174 (HSHPGYGCWLSGID) is the JAMM motif element. Disordered stretches follow at residues 210-248 (RTYP…LPKS) and 381-456 (TTTK…EVDS). A compositionally biased stretch (polar residues) spans 214 to 224 (EGSQQQPSMTN). Acidic residues-rich tracts occupy residues 392–404 (TDID…DESD), 420–431 (SDDDDEEEEGEG), and 445–456 (EVEEGPTDEVDS).

The protein belongs to the peptidase M67A family. CSN5 subfamily. In terms of assembly, component of the COP9 signalosome (CSN) complex.

The protein resides in the cytoplasm. The protein localises to the nucleus. Catalytic Component of the COP9 signalosome (CSN) complex that acts as an regulator of the ubiquitin (Ubl) conjugation pathway by mediating the deneddylation of the cullin subunit of SCF-type E3 ubiquitin-protein ligase complexes. The chain is COP9 signalosome complex subunit 5 (JAB1) from Candida albicans (strain SC5314 / ATCC MYA-2876) (Yeast).